Reading from the N-terminus, the 266-residue chain is DNA primase (266 aa).

The segment at 244–266 (VTTTTTPSPPKIGSMQTTTKSTT) is disordered. The span at 257–266 (SMQTTTKSTT) shows a compositional bias: polar residues.

It belongs to the baculoviridae LEF-1 family. As to quaternary structure, interacts with LEF-2.

Plays an essential role in viral DNA replication. May generates single-stranded DNA for both leading and lagging strand synthesis. The primase initiates primer synthesis and thereby produces large amount of short RNA primers on the lagging strand that the polymerase elongates using dNTPs. The sequence is that of DNA primase (LEF-1) from Autographa californica nuclear polyhedrosis virus (AcMNPV).